We begin with the raw amino-acid sequence, 254 residues long: 5'-nucleotidase SurE (254 aa).

The a divalent metal cation site is built by D8, D9, S38, and N91.

This sequence belongs to the SurE nucleotidase family. A divalent metal cation serves as cofactor.

Its subcellular location is the cytoplasm. The catalysed reaction is a ribonucleoside 5'-phosphate + H2O = a ribonucleoside + phosphate. In terms of biological role, nucleotidase that shows phosphatase activity on nucleoside 5'-monophosphates. This chain is 5'-nucleotidase SurE, found in Anaeromyxobacter dehalogenans (strain 2CP-C).